Reading from the N-terminus, the 145-residue chain is MSQEQAEQLMQQMQMLETYFADLSQRENTFLGVFREATAAIESIKSLSKNPESDTLVPIGLGTYVPTKISSDSKIILNIGAGVAVEKDFPSAINYLEERIKEIEIAIQDTAAKKQDAAQRLEQGKAQVNQLMQAMQQSGQPPKSG.

It belongs to the prefoldin alpha subunit family. As to quaternary structure, heterohexamer of two alpha and four beta subunits.

It localises to the cytoplasm. Molecular chaperone capable of stabilizing a range of proteins. Seems to fulfill an ATP-independent, HSP70-like function in archaeal de novo protein folding. This is Prefoldin subunit alpha from Nitrosopumilus maritimus (strain SCM1).